The primary structure comprises 116 residues: Large ribosomal subunit protein bL20 (116 aa).

It belongs to the bacterial ribosomal protein bL20 family.

In terms of biological role, binds directly to 23S ribosomal RNA and is necessary for the in vitro assembly process of the 50S ribosomal subunit. It is not involved in the protein synthesizing functions of that subunit. The protein is Large ribosomal subunit protein bL20 of Mycoplasmopsis agalactiae (strain NCTC 10123 / CIP 59.7 / PG2) (Mycoplasma agalactiae).